Consider the following 297-residue polypeptide: HTH-type transcriptional regulator ArgP (297 aa).

One can recognise an HTH lysR-type domain in the interval 4 to 60; sequence PDYRTLQALDAVIRERGFERAAQKLCITQSAVSQRIKQLENMFGQPLLVRTVPPRPT. Residues 21-40 constitute a DNA-binding region (H-T-H motif); the sequence is FERAAQKLCITQSAVSQRIK.

This sequence belongs to the LysR transcriptional regulatory family. Homodimer.

Functionally, controls the transcription of genes involved in arginine and lysine metabolism. The chain is HTH-type transcriptional regulator ArgP from Salmonella choleraesuis (strain SC-B67).